Reading from the N-terminus, the 312-residue chain is Glyoxylate/hydroxypyruvate reductase A (312 aa).

Arg227 is a catalytic residue. His275 (proton donor) is an active-site residue.

The protein belongs to the D-isomer specific 2-hydroxyacid dehydrogenase family. GhrA subfamily.

The protein localises to the cytoplasm. It catalyses the reaction glycolate + NADP(+) = glyoxylate + NADPH + H(+). It carries out the reaction (R)-glycerate + NAD(+) = 3-hydroxypyruvate + NADH + H(+). The enzyme catalyses (R)-glycerate + NADP(+) = 3-hydroxypyruvate + NADPH + H(+). Functionally, catalyzes the NADPH-dependent reduction of glyoxylate and hydroxypyruvate into glycolate and glycerate, respectively. The chain is Glyoxylate/hydroxypyruvate reductase A from Escherichia coli (strain UTI89 / UPEC).